Consider the following 381-residue polypeptide: Creatine kinase M-type (381 aa).

A Phosphagen kinase N-terminal domain is found at 11–98 (KLNFKAEEEY…FDPIIQDRHG (88 aa)). Positions 125 to 367 (YVLSSRVRTG…KLMVEMEKKL (243 aa)) constitute a Phosphagen kinase C-terminal domain. 128 to 132 (SSRVR) serves as a coordination point for ATP. Phosphoserine is present on serine 164. The residue at position 166 (threonine 166) is a Phosphothreonine. Phosphoserine is present on serine 178. Threonine 180 carries the post-translational modification Phosphothreonine. Residue histidine 191 participates in ATP binding. A Phosphoserine modification is found at serine 199. Arginine 236 and arginine 292 together coordinate ATP. Phosphothreonine is present on residues threonine 313 and threonine 322. ATP-binding positions include 320-325 (RGTGGV) and aspartate 335. Phosphoserine is present on serine 372.

This sequence belongs to the ATP:guanido phosphotransferase family. Dimer of identical or non-identical chains, which can be either B (brain type) or M (muscle type). With MM being the major form in skeletal muscle and myocardium, MB existing in myocardium, and BB existing in many tissues, especially brain.

The protein localises to the cytoplasm. It catalyses the reaction creatine + ATP = N-phosphocreatine + ADP + H(+). Functionally, reversibly catalyzes the transfer of phosphate between ATP and various phosphogens (e.g. creatine phosphate). Creatine kinase isoenzymes play a central role in energy transduction in tissues with large, fluctuating energy demands, such as skeletal muscle, heart, brain and spermatozoa. This is Creatine kinase M-type (CKM) from Bos taurus (Bovine).